The following is a 160-amino-acid chain: MFHITVLAVGRLKEKYLTEGAAEYLKRLSAYAKISVVEVEDGSLPENPAAAGGEKVKEKEGERLLGRLRPGTFLIALDVRGKMHSSEEMAEILNRLALSGRSDITFAIGGALGLSEKVLERAAMRLSFSRMTFPHQLVRLILLEQLYRWFKIARGEPYHY.

Residues Leu-77, Gly-109, and Phe-128 to Phe-133 contribute to the S-adenosyl-L-methionine site.

This sequence belongs to the RNA methyltransferase RlmH family. As to quaternary structure, homodimer.

The protein resides in the cytoplasm. The catalysed reaction is pseudouridine(1915) in 23S rRNA + S-adenosyl-L-methionine = N(3)-methylpseudouridine(1915) in 23S rRNA + S-adenosyl-L-homocysteine + H(+). Functionally, specifically methylates the pseudouridine at position 1915 (m3Psi1915) in 23S rRNA. In Pelotomaculum thermopropionicum (strain DSM 13744 / JCM 10971 / SI), this protein is Ribosomal RNA large subunit methyltransferase H.